A 142-amino-acid chain; its full sequence is Large ribosomal subunit protein uL13 (142 aa).

The protein belongs to the universal ribosomal protein uL13 family. As to quaternary structure, part of the 50S ribosomal subunit.

Its function is as follows. This protein is one of the early assembly proteins of the 50S ribosomal subunit, although it is not seen to bind rRNA by itself. It is important during the early stages of 50S assembly. This chain is Large ribosomal subunit protein uL13, found in Klebsiella pneumoniae (strain 342).